We begin with the raw amino-acid sequence, 210 residues long: Orotate phosphoribosyltransferase (210 aa).

Residues Arg-94, Lys-98, His-100, and 120 to 128 (EDLISTGGS) each bind 5-phospho-alpha-D-ribose 1-diphosphate. Ser-124 lines the orotate pocket.

This sequence belongs to the purine/pyrimidine phosphoribosyltransferase family. PyrE subfamily. In terms of assembly, homodimer. Mg(2+) serves as cofactor.

It carries out the reaction orotidine 5'-phosphate + diphosphate = orotate + 5-phospho-alpha-D-ribose 1-diphosphate. The protein operates within pyrimidine metabolism; UMP biosynthesis via de novo pathway; UMP from orotate: step 1/2. Its function is as follows. Catalyzes the transfer of a ribosyl phosphate group from 5-phosphoribose 1-diphosphate to orotate, leading to the formation of orotidine monophosphate (OMP). This Bacillus cereus (strain ATCC 14579 / DSM 31 / CCUG 7414 / JCM 2152 / NBRC 15305 / NCIMB 9373 / NCTC 2599 / NRRL B-3711) protein is Orotate phosphoribosyltransferase.